A 482-amino-acid chain; its full sequence is 23S rRNA (uracil(1939)-C(5))-methyltransferase RlmD (482 aa).

The segment at 1–33 is disordered; sequence MANLFKQSRAKQKNKTTPSQTQTSTKGSARANA. Low complexity predominate over residues 15-28; that stretch reads KTTPSQTQTSTKGS. A TRAM domain is found at 51-108; the sequence is TAQDANNNAITIQELDWMGQGVARGATMYFVEGALPGETCDIEVVSSKKKVVSAKTIS. 4 residues coordinate [4Fe-4S] cluster: Cys121, Cys127, Cys130, and Cys208. Residues Gln313, Phe342, Asn347, Glu363, Asp390, and Asp411 each contribute to the S-adenosyl-L-methionine site. The Nucleophile role is filled by Cys437.

This sequence belongs to the class I-like SAM-binding methyltransferase superfamily. RNA M5U methyltransferase family. RlmD subfamily.

The catalysed reaction is uridine(1939) in 23S rRNA + S-adenosyl-L-methionine = 5-methyluridine(1939) in 23S rRNA + S-adenosyl-L-homocysteine + H(+). Its function is as follows. Catalyzes the formation of 5-methyl-uridine at position 1939 (m5U1939) in 23S rRNA. The protein is 23S rRNA (uracil(1939)-C(5))-methyltransferase RlmD of Alteromonas mediterranea (strain DSM 17117 / CIP 110805 / LMG 28347 / Deep ecotype).